We begin with the raw amino-acid sequence, 149 residues long: Transcriptional repressor NrdR (149 aa).

A zinc finger lies at 3–34 (CPFCFAVDTKVIDSRLVGEGSSVRRRRQCLVC). An ATP-cone domain is found at 49 to 139 (PRVVKSNDVR…VYRSFEDIRE (91 aa)).

Belongs to the NrdR family. Zn(2+) serves as cofactor.

Negatively regulates transcription of bacterial ribonucleotide reductase nrd genes and operons by binding to NrdR-boxes. The protein is Transcriptional repressor NrdR of Cronobacter sakazakii (strain ATCC BAA-894) (Enterobacter sakazakii).